The chain runs to 276 residues: Undecaprenyl-diphosphatase (276 aa).

The next 7 membrane-spanning stretches (helical) occupy residues 46–66, 94–114, 122–142, 152–172, 196–216, 226–246, and 253–273; these read AGASFAAVIQLGSLGAVLIYF, LMGILVGTLPIVIAGWAVKAI, LWVVAAAAIGLALALGWAERV, LGIGDGLWVGLAQALALIPGV, SFLLGIPALFLAGVAEFIAEF, LGTLSAFVFSYGSIDWLIRFL, and VFIVYRIGFGLFIFLGLALGF.

The protein belongs to the UppP family.

The protein localises to the cell inner membrane. The enzyme catalyses di-trans,octa-cis-undecaprenyl diphosphate + H2O = di-trans,octa-cis-undecaprenyl phosphate + phosphate + H(+). Catalyzes the dephosphorylation of undecaprenyl diphosphate (UPP). Confers resistance to bacitracin. This Synechococcus sp. (strain JA-3-3Ab) (Cyanobacteria bacterium Yellowstone A-Prime) protein is Undecaprenyl-diphosphatase.